A 102-amino-acid chain; its full sequence is RNA-binding protein Hfq (102 aa).

One can recognise a Sm domain in the interval 9-68 (DPFLNALRRERVPVSIYLVNGIKLQGQIESFDQFVILLKNTVSQMVYKHAISTVVPSRPV). Positions 63–102 (VPSRPVSHHSNNAGGGASNNYHHGSNAQGSTAQQDSEETE) are disordered. A compositionally biased stretch (low complexity) spans 70–88 (HHSNNAGGGASNNYHHGSN).

The protein belongs to the Hfq family. In terms of assembly, homohexamer.

RNA chaperone that binds small regulatory RNA (sRNAs) and mRNAs to facilitate mRNA translational regulation in response to envelope stress, environmental stress and changes in metabolite concentrations. Also binds with high specificity to tRNAs. This is RNA-binding protein Hfq from Salmonella agona (strain SL483).